The primary structure comprises 589 residues: Mitogen-activated protein kinase 8 (589 aa).

Residues 18–56 (RPSSSSSSSSSNNNNNNHEQPIFNSSSFSSSSNPNHSAN) form a disordered region. Composition is skewed to low complexity over residues 20–34 (SSSS…NNNN) and 41–56 (NSSS…HSAN). In terms of domain architecture, Protein kinase spans 104 to 395 (YQIQEVVGKG…AEDALADPYF (292 aa)). ATP is bound by residues 110-118 (VGKGSYGVV) and Lys-133. Asp-230 serves as the catalytic Proton acceptor. Thr-266 carries the phosphothreonine modification. Residues 266–268 (TDY) carry the TXY motif. Tyr-268 bears the Phosphotyrosine mark. Phosphothreonine is present on Thr-271. The interval 474-589 (NQGKPGAAGG…TDKVASLHNS (116 aa)) is disordered.

It belongs to the protein kinase superfamily. CMGC Ser/Thr protein kinase family. MAP kinase subfamily. As to quaternary structure, interacts with CAM3, CAM4 and CAM7 in an calcium-dependent manner. Post-translationally, dually phosphorylated on Thr-266 and Tyr-268, which activates the enzyme. Autophosphorylated. As to expression, ubiquitous.

The catalysed reaction is L-seryl-[protein] + ATP = O-phospho-L-seryl-[protein] + ADP + H(+). It catalyses the reaction L-threonyl-[protein] + ATP = O-phospho-L-threonyl-[protein] + ADP + H(+). Its activity is regulated as follows. Activated by threonine and tyrosine phosphorylation. Activated by two independent mechanisms, the binding of CAMs in a calcium-dependent manner and the phosphorylation by MAP kinase kinase MKK3. Activated in response to mechanical wounding, hydrogen peroxide and jasmonic acid (JA). In terms of biological role, MKK3-MPK8 and CAMs-MPK8 modules negatively regulates ROS accumulation through controlling expression of the RBOHD gene during wounding. The sequence is that of Mitogen-activated protein kinase 8 (MPK8) from Arabidopsis thaliana (Mouse-ear cress).